Consider the following 340-residue polypeptide: Coproporphyrin III ferrochelatase (340 aa).

Fe-coproporphyrin III is bound by residues serine 52 and tyrosine 116. The Fe(2+) site is built by histidine 172 and glutamate 255.

This sequence belongs to the ferrochelatase family.

The protein localises to the cytoplasm. The enzyme catalyses Fe-coproporphyrin III + 2 H(+) = coproporphyrin III + Fe(2+). It participates in porphyrin-containing compound metabolism; protoheme biosynthesis. Functionally, involved in coproporphyrin-dependent heme b biosynthesis. Catalyzes the insertion of ferrous iron into coproporphyrin III to form Fe-coproporphyrin III. The sequence is that of Coproporphyrin III ferrochelatase from Mycobacterium marinum (strain ATCC BAA-535 / M).